The chain runs to 156 residues: Small ribosomal subunit protein uS7 (156 aa).

It belongs to the universal ribosomal protein uS7 family. As to quaternary structure, part of the 30S ribosomal subunit. Contacts proteins S9 and S11.

In terms of biological role, one of the primary rRNA binding proteins, it binds directly to 16S rRNA where it nucleates assembly of the head domain of the 30S subunit. Is located at the subunit interface close to the decoding center, probably blocks exit of the E-site tRNA. In Mycobacterium bovis (strain ATCC BAA-935 / AF2122/97), this protein is Small ribosomal subunit protein uS7.